A 259-amino-acid chain; its full sequence is Putative protein phosphatase (259 aa).

The PPM-type phosphatase domain maps to 8 to 255 (LFASLSKKGP…DNITLNLINL (248 aa)).

It carries out the reaction O-phospho-L-seryl-[protein] + H2O = L-seryl-[protein] + phosphate. It catalyses the reaction O-phospho-L-threonyl-[protein] + H2O = L-threonyl-[protein] + phosphate. In Mycoplasma pneumoniae (strain ATCC 29342 / M129 / Subtype 1) (Mycoplasmoides pneumoniae), this protein is Putative protein phosphatase.